The chain runs to 181 residues: Protein GrpE (181 aa).

Belongs to the GrpE family. In terms of assembly, homodimer.

It is found in the cytoplasm. Its function is as follows. Participates actively in the response to hyperosmotic and heat shock by preventing the aggregation of stress-denatured proteins, in association with DnaK and GrpE. It is the nucleotide exchange factor for DnaK and may function as a thermosensor. Unfolded proteins bind initially to DnaJ; upon interaction with the DnaJ-bound protein, DnaK hydrolyzes its bound ATP, resulting in the formation of a stable complex. GrpE releases ADP from DnaK; ATP binding to DnaK triggers the release of the substrate protein, thus completing the reaction cycle. Several rounds of ATP-dependent interactions between DnaJ, DnaK and GrpE are required for fully efficient folding. This Verminephrobacter eiseniae (strain EF01-2) protein is Protein GrpE.